Here is a 400-residue protein sequence, read N- to C-terminus: Imidazolonepropionase (400 aa).

The Fe(3+) site is built by histidine 70 and histidine 72. Positions 70 and 72 each coordinate Zn(2+). 3 residues coordinate 4-imidazolone-5-propanoate: arginine 79, tyrosine 142, and histidine 175. An N-formimidoyl-L-glutamate-binding site is contributed by tyrosine 142. Histidine 239 contributes to the Fe(3+) binding site. A Zn(2+)-binding site is contributed by histidine 239. Residue glutamine 242 coordinates 4-imidazolone-5-propanoate. Aspartate 314 provides a ligand contact to Fe(3+). Aspartate 314 serves as a coordination point for Zn(2+). The N-formimidoyl-L-glutamate site is built by asparagine 316 and glycine 318. 4-imidazolone-5-propanoate is bound at residue threonine 319.

The protein belongs to the metallo-dependent hydrolases superfamily. HutI family. Zn(2+) is required as a cofactor. The cofactor is Fe(3+).

It localises to the cytoplasm. It carries out the reaction 4-imidazolone-5-propanoate + H2O = N-formimidoyl-L-glutamate. It participates in amino-acid degradation; L-histidine degradation into L-glutamate; N-formimidoyl-L-glutamate from L-histidine: step 3/3. Its function is as follows. Catalyzes the hydrolytic cleavage of the carbon-nitrogen bond in imidazolone-5-propanoate to yield N-formimidoyl-L-glutamate. It is the third step in the universal histidine degradation pathway. The sequence is that of Imidazolonepropionase from Methylobacterium nodulans (strain LMG 21967 / CNCM I-2342 / ORS 2060).